A 140-amino-acid polypeptide reads, in one-letter code: Nucleoside diphosphate kinase (140 aa).

Positions 11, 59, 87, 93, 104, and 114 each coordinate ATP. The active-site Pros-phosphohistidine intermediate is the H117.

This sequence belongs to the NDK family. Homotetramer. The cofactor is Mg(2+).

It is found in the cytoplasm. The enzyme catalyses a 2'-deoxyribonucleoside 5'-diphosphate + ATP = a 2'-deoxyribonucleoside 5'-triphosphate + ADP. The catalysed reaction is a ribonucleoside 5'-diphosphate + ATP = a ribonucleoside 5'-triphosphate + ADP. Functionally, major role in the synthesis of nucleoside triphosphates other than ATP. The ATP gamma phosphate is transferred to the NDP beta phosphate via a ping-pong mechanism, using a phosphorylated active-site intermediate. This Beijerinckia indica subsp. indica (strain ATCC 9039 / DSM 1715 / NCIMB 8712) protein is Nucleoside diphosphate kinase.